An 88-amino-acid polypeptide reads, in one-letter code: Small ribosomal subunit protein bS20 (88 aa).

Belongs to the bacterial ribosomal protein bS20 family.

In terms of biological role, binds directly to 16S ribosomal RNA. The sequence is that of Small ribosomal subunit protein bS20 from Clostridium botulinum (strain ATCC 19397 / Type A).